A 342-amino-acid polypeptide reads, in one-letter code: tRNA N6-adenosine threonylcarbamoyltransferase (342 aa).

2 residues coordinate Fe cation: H114 and H118. Residues 136–140 (LVSGG), D169, G182, D186, and N275 contribute to the substrate site. D301 is a Fe cation binding site.

The protein belongs to the KAE1 / TsaD family. Requires Fe(2+) as cofactor.

It localises to the cytoplasm. The catalysed reaction is L-threonylcarbamoyladenylate + adenosine(37) in tRNA = N(6)-L-threonylcarbamoyladenosine(37) in tRNA + AMP + H(+). Its function is as follows. Required for the formation of a threonylcarbamoyl group on adenosine at position 37 (t(6)A37) in tRNAs that read codons beginning with adenine. Is involved in the transfer of the threonylcarbamoyl moiety of threonylcarbamoyl-AMP (TC-AMP) to the N6 group of A37, together with TsaE and TsaB. TsaD likely plays a direct catalytic role in this reaction. In Streptococcus pyogenes serotype M18 (strain MGAS8232), this protein is tRNA N6-adenosine threonylcarbamoyltransferase.